A 240-amino-acid chain; its full sequence is Vesicle-associated membrane protein 727 (240 aa).

Residues 1-215 (MSQKGLIYSF…MWLQSLQMKL (215 aa)) lie on the Cytoplasmic side of the membrane. The 128-residue stretch at 6–133 (LIYSFVAKGT…NLDREFGPIL (128 aa)) folds into the Longin domain. The 61-residue stretch at 149–209 (KLSKLKAQIT…RQLRRKMWLQ (61 aa)) folds into the v-SNARE coiled-coil homology domain. The helical; Anchor for type IV membrane protein transmembrane segment at 216–236 (MVAGAVFSFILIVWVVACGGF) threads the bilayer. Over 237 to 240 (KCSS) the chain is Vesicular.

The protein belongs to the synaptobrevin family. As to quaternary structure, interacts with subunits of the class C core vacuole/endosome tethering (CORVET) complex including VPS11, VCL1, VPS18, VPS33, VPS3 and VPS8. As to expression, highly expressed in flowers. Detected in leaves, stems and roots.

It localises to the early endosome membrane. Its subcellular location is the endosome membrane. Its function is as follows. Involved in the targeting and/or fusion of transport vesicles to their target membrane. This is Vesicle-associated membrane protein 727 (VAMP727) from Arabidopsis thaliana (Mouse-ear cress).